The following is a 315-amino-acid chain: Methionyl-tRNA formyltransferase (315 aa).

113 to 116 contacts (6S)-5,6,7,8-tetrahydrofolate; that stretch reads SLLP.

It belongs to the Fmt family.

It catalyses the reaction L-methionyl-tRNA(fMet) + (6R)-10-formyltetrahydrofolate = N-formyl-L-methionyl-tRNA(fMet) + (6S)-5,6,7,8-tetrahydrofolate + H(+). Functionally, attaches a formyl group to the free amino group of methionyl-tRNA(fMet). The formyl group appears to play a dual role in the initiator identity of N-formylmethionyl-tRNA by promoting its recognition by IF2 and preventing the misappropriation of this tRNA by the elongation apparatus. This chain is Methionyl-tRNA formyltransferase, found in Salmonella enteritidis PT4 (strain P125109).